Here is a 420-residue protein sequence, read N- to C-terminus: MLAWSSPDVPSLDDPGECPREVRVRDTATGELTPAGHDGRASMYVCGITPYDSTHLGHANTYVSFDLLVRAWRDAGLAVTYVQNVTDVDDPLLERAAATGVDWRQLAADQIELFHHDMVALRVVAPEHYIGAVESVPDVVRAVERMLADRAAYRVGAAADGAGDGDVYAALSADPRFGSLGSLDEAEMLELFGERGGDPDRLGKQAPLDPLLWRVEREEEPSWPGESLGRGRPGWHIECATIAARFLGVPFDVQGGGTDLEFPHHEMSESHLRVLTATAHPARAHVHGGMVAYQGHKMSKSRGNLVFVSELVASGVDPMAVRLVILAHHYAEDWEYEAGALGLAEERLATWRAALAQGSGPSGADVVAGVRAALANDLDAPGAVAVVDDWAAAAIAGSGDDAAAGATVARAVDALLGVAL.

Zn(2+) is bound at residue cysteine 46. L-cysteinyl-5'-AMP is bound by residues 46-49 (CGIT), threonine 61, and 84-86 (NVT). The short motif at 48-58 (ITPYDSTHLGH) is the 'HIGH' region element. The 'ERGGDP' region signature appears at 194–199 (ERGGDP). Tryptophan 235 serves as a coordination point for L-cysteinyl-5'-AMP. Cysteine 239 provides a ligand contact to Zn(2+). 257-259 (GTD) is a binding site for L-cysteinyl-5'-AMP. Histidine 264 lines the Zn(2+) pocket. Residue valine 291 participates in L-cysteinyl-5'-AMP binding. Positions 297–301 (KMSKS) match the 'KMSKS' region motif.

It belongs to the class-I aminoacyl-tRNA synthetase family. MshC subfamily. In terms of assembly, monomer. Zn(2+) is required as a cofactor.

It catalyses the reaction 1D-myo-inositol 2-amino-2-deoxy-alpha-D-glucopyranoside + L-cysteine + ATP = 1D-myo-inositol 2-(L-cysteinylamino)-2-deoxy-alpha-D-glucopyranoside + AMP + diphosphate + H(+). Functionally, catalyzes the ATP-dependent condensation of GlcN-Ins and L-cysteine to form L-Cys-GlcN-Ins. The polypeptide is L-cysteine:1D-myo-inositol 2-amino-2-deoxy-alpha-D-glucopyranoside ligase (Beutenbergia cavernae (strain ATCC BAA-8 / DSM 12333 / CCUG 43141 / JCM 11478 / NBRC 16432 / NCIMB 13614 / HKI 0122)).